The following is a 342-amino-acid chain: MRVLLFLLLSLFMLPAFSADNLLRWHDAQHFTVQASTPLKAKRAWKLCALYPSLKDSYWLSLNYGMQEAARRYGVDLKVLEAGGYSQLATQQAQIDQCKQWGAEAILLGSSTTSFPDLQKQVASLPVIELVNAIDAPQVKSRVGVPWFQMGYQPGRYLVQWAHGKPLNVLLMPGPDNAGGSKEMVEGFRAAIAGSPVRIVDIALGDNDIEIQRNLLQEMLERHPEIDVVAGTAIAAEAAMGEGRNLKTPLTVVSFYLSHQVYRGLKRGRVIMAASDQMVWQGELAVEQAIRQLQGQSVSDNVSPPILVLTPKNADREHIRRSLSPGGFRPVYFYQHTSAAKK.

A signal peptide spans Met-1–Ser-18.

Belongs to the bacterial solute-binding protein 2 family.

The protein localises to the periplasm. Upon binding a putative inducer it probably interacts with TorS and allows it to play a role in the induction of the torCAD operon for trimethylamine N-oxide reductase. The protein is Periplasmic protein TorT (torT) of Escherichia coli (strain K12).